A 209-amino-acid chain; its full sequence is Probable nicotinate-nucleotide adenylyltransferase (209 aa).

This sequence belongs to the NadD family.

It catalyses the reaction nicotinate beta-D-ribonucleotide + ATP + H(+) = deamido-NAD(+) + diphosphate. The protein operates within cofactor biosynthesis; NAD(+) biosynthesis; deamido-NAD(+) from nicotinate D-ribonucleotide: step 1/1. Functionally, catalyzes the reversible adenylation of nicotinate mononucleotide (NaMN) to nicotinic acid adenine dinucleotide (NaAD). This chain is Probable nicotinate-nucleotide adenylyltransferase, found in Hydrogenovibrio crunogenus (strain DSM 25203 / XCL-2) (Thiomicrospira crunogena).